The sequence spans 481 residues: Cysteine--tRNA ligase (481 aa).

Residue Cys29 coordinates Zn(2+). The 'HIGH' region motif lies at 31-41 (PTVYDYSHLGH). Zn(2+) contacts are provided by Cys210, His235, and Glu239. The 'KMSKS' region signature appears at 272–276 (KMSKS). Position 275 (Lys275) interacts with ATP.

This sequence belongs to the class-I aminoacyl-tRNA synthetase family. In terms of assembly, monomer. Requires Zn(2+) as cofactor.

Its subcellular location is the cytoplasm. The enzyme catalyses tRNA(Cys) + L-cysteine + ATP = L-cysteinyl-tRNA(Cys) + AMP + diphosphate. This chain is Cysteine--tRNA ligase, found in Anaeromyxobacter dehalogenans (strain 2CP-1 / ATCC BAA-258).